Consider the following 214-residue polypeptide: tRNA (guanine-N(7)-)-methyltransferase (214 aa).

Residues glutamate 44, glutamate 69, aspartate 96, and aspartate 118 each contribute to the S-adenosyl-L-methionine site. Aspartate 118 is an active-site residue. Lysine 122 is a substrate binding site. An interaction with RNA region spans residues 124-129 (RHEKRR). Residues aspartate 154 and 192-195 (TEYE) each bind substrate.

Belongs to the class I-like SAM-binding methyltransferase superfamily. TrmB family.

It carries out the reaction guanosine(46) in tRNA + S-adenosyl-L-methionine = N(7)-methylguanosine(46) in tRNA + S-adenosyl-L-homocysteine. The protein operates within tRNA modification; N(7)-methylguanine-tRNA biosynthesis. Its function is as follows. Catalyzes the formation of N(7)-methylguanine at position 46 (m7G46) in tRNA. The chain is tRNA (guanine-N(7)-)-methyltransferase from Lacticaseibacillus casei (strain BL23) (Lactobacillus casei).